Here is a 360-residue protein sequence, read N- to C-terminus: S-adenosylmethionine:tRNA ribosyltransferase-isomerase (360 aa).

This sequence belongs to the QueA family. Monomer.

Its subcellular location is the cytoplasm. The catalysed reaction is 7-aminomethyl-7-carbaguanosine(34) in tRNA + S-adenosyl-L-methionine = epoxyqueuosine(34) in tRNA + adenine + L-methionine + 2 H(+). Its pathway is tRNA modification; tRNA-queuosine biosynthesis. Transfers and isomerizes the ribose moiety from AdoMet to the 7-aminomethyl group of 7-deazaguanine (preQ1-tRNA) to give epoxyqueuosine (oQ-tRNA). This Rhodopseudomonas palustris (strain TIE-1) protein is S-adenosylmethionine:tRNA ribosyltransferase-isomerase.